The following is a 1170-amino-acid chain: Error-prone DNA polymerase (1170 aa).

Disordered regions lie at residues 867 to 899 (RGARSANPESRDSGFALRAPRNDNDRQIPLHND) and 1129 to 1170 (IPHG…RDFH). The span at 886–899 (PRNDNDRQIPLHND) shows a compositional bias: basic and acidic residues.

It belongs to the DNA polymerase type-C family. DnaE2 subfamily.

Its subcellular location is the cytoplasm. The catalysed reaction is DNA(n) + a 2'-deoxyribonucleoside 5'-triphosphate = DNA(n+1) + diphosphate. Its function is as follows. DNA polymerase involved in damage-induced mutagenesis and translesion synthesis (TLS). It is not the major replicative DNA polymerase. This Bradyrhizobium sp. (strain ORS 278) protein is Error-prone DNA polymerase.